We begin with the raw amino-acid sequence, 292 residues long: Acetyl-coenzyme A carboxylase carboxyl transferase subunit beta (292 aa).

The CoA carboxyltransferase N-terminal domain maps to 23–292 (VWSKCTACGN…TEATEVSVNE (270 aa)). Zn(2+)-binding residues include Cys-27, Cys-30, Cys-46, and Cys-49. The segment at 27 to 49 (CTACGNIIYKADLERSLNVCPKC) adopts a C4-type zinc-finger fold.

It belongs to the AccD/PCCB family. Acetyl-CoA carboxylase is a heterohexamer composed of biotin carboxyl carrier protein (AccB), biotin carboxylase (AccC) and two subunits each of ACCase subunit alpha (AccA) and ACCase subunit beta (AccD). It depends on Zn(2+) as a cofactor.

The protein resides in the cytoplasm. It catalyses the reaction N(6)-carboxybiotinyl-L-lysyl-[protein] + acetyl-CoA = N(6)-biotinyl-L-lysyl-[protein] + malonyl-CoA. It functions in the pathway lipid metabolism; malonyl-CoA biosynthesis; malonyl-CoA from acetyl-CoA: step 1/1. In terms of biological role, component of the acetyl coenzyme A carboxylase (ACC) complex. Biotin carboxylase (BC) catalyzes the carboxylation of biotin on its carrier protein (BCCP) and then the CO(2) group is transferred by the transcarboxylase to acetyl-CoA to form malonyl-CoA. This chain is Acetyl-coenzyme A carboxylase carboxyl transferase subunit beta, found in Idiomarina loihiensis (strain ATCC BAA-735 / DSM 15497 / L2-TR).